The sequence spans 97 residues: YcgL domain-containing protein PA1295 (97 aa).

Positions 3-87 (RICSVYKSPR…GEEEYIEHLP (85 aa)) constitute a YcgL domain.

This is YcgL domain-containing protein PA1295 from Pseudomonas aeruginosa (strain ATCC 15692 / DSM 22644 / CIP 104116 / JCM 14847 / LMG 12228 / 1C / PRS 101 / PAO1).